The sequence spans 93 residues: MANKKIDHREEAIELLKQDAKRILQLIKVQMDNLTLPQCPAYEEVLDTQMYGLSREINFATRLGLIEPEEGKKLISTLEKELSALHELSMSKK.

The protein belongs to the UPF0358 family.

This is UPF0358 protein lin1058 from Listeria innocua serovar 6a (strain ATCC BAA-680 / CLIP 11262).